A 130-amino-acid chain; its full sequence is UPF0251 protein MmarC5_0986 (130 aa).

It belongs to the UPF0251 family.

This Methanococcus maripaludis (strain C5 / ATCC BAA-1333) protein is UPF0251 protein MmarC5_0986.